Reading from the N-terminus, the 60-residue chain is Large ribosomal subunit protein bL32 (60 aa).

Positions 1-20 are enriched in basic residues; it reads MAVQKSRKSRSRRDMRRSHH. The disordered stretch occupies residues 1–22; the sequence is MAVQKSRKSRSRRDMRRSHHRM.

This sequence belongs to the bacterial ribosomal protein bL32 family.

The protein is Large ribosomal subunit protein bL32 of Psychrobacter arcticus (strain DSM 17307 / VKM B-2377 / 273-4).